The chain runs to 1284 residues: Integrator complex subunit 6 (1284 aa).

Residues 3-134 (IILFLVDTSS…PSVIIVITDG (132 aa)) enclose the VWFA domain. 4 disordered regions span residues 653–824 (DVAP…GMSN), 864–895 (ETGE…SPAV), 1053–1086 (TSSG…DDHA), and 1125–1180 (NNSS…PGQS). Over residues 690 to 721 (SPGGGSGPGMPGMPGMGGGMSGLMLGAGGSGG) the composition is skewed to gly residues. 2 stretches are compositionally biased toward low complexity: residues 752 to 781 (DSRS…SSIS) and 803 to 824 (NSNS…GMSN). Positions 879–890 (GASSANEPSSIG) are enriched in polar residues. Composition is skewed to low complexity over residues 1053–1074 (TSSG…NGST) and 1125–1141 (NNSS…LSNN). Residues 1159–1171 (INSSCGSSPTHNN) are compositionally biased toward polar residues.

This sequence belongs to the Integrator subunit 6 family. As to quaternary structure, belongs to the multiprotein complex Integrator, at least composed of IntS1, IntS2, IntS3, IntS4, omd/IntS5, IntS6, defl/IntS7, IntS8, IntS9, IntS10, IntS11, IntS12, asun/IntS13, IntS14 and IntS15. The core complex associates with protein phosphatase 2A subunits mts/PP2A and Pp2A-29B, to form the Integrator-PP2A (INTAC) complex.

It localises to the nucleus. Its function is as follows. Component of the integrator complex, a multiprotein complex that terminates RNA polymerase II (Pol II) transcription in the promoter-proximal region of genes. The integrator complex provides a quality checkpoint during transcription elongation by driving premature transcription termination of transcripts that are unfavorably configured for transcriptional elongation: the complex terminates transcription by (1) catalyzing dephosphorylation of the C-terminal domain (CTD) of Pol II subunit Polr2A/Rbp1 and Spt5, and (2) degrading the exiting nascent RNA transcript via endonuclease activity. The integrator complex is also involved in the 3'-end processing of the U7 snRNA, and also the spliceosomal snRNAs U1, U2, U4 and U5. Within the integrator complex, IntS6 acts as a substrate adapter for protein phosphatase 2A (PP2A). The sequence is that of Integrator complex subunit 6 from Drosophila melanogaster (Fruit fly).